We begin with the raw amino-acid sequence, 187 residues long: Calcium and integrin-binding family member 2 (187 aa).

3 consecutive EF-hand domains span residues 66–101 (KENP…LSEM), 103–138 (PREL…LTKE), and 144–179 (EVNL…APDF). Positions 157, 159, 161, 163, and 168 each coordinate Ca(2+).

Monomer. Homodimer. In terms of tissue distribution, enriched in central and striolar hair cells.

The protein resides in the cytoplasm. It localises to the cell projection. Its subcellular location is the stereocilium. It is found in the photoreceptor inner segment. The protein localises to the cilium. The protein resides in the photoreceptor outer segment. It localises to the cell membrane. Its subcellular location is the sarcolemma. Functionally, calcium- and integrin-binding protein. Plays a role in intracellular calcium homeostasis. Critical for proper photoreceptor cell maintenance and function. Essential for development, maintenance and function of mechanosensory hair cells. This Danio rerio (Zebrafish) protein is Calcium and integrin-binding family member 2.